Reading from the N-terminus, the 84-residue chain is Large ribosomal subunit protein eL34 (84 aa).

It belongs to the eukaryotic ribosomal protein eL34 family.

The protein is Large ribosomal subunit protein eL34 of Pyrobaculum calidifontis (strain DSM 21063 / JCM 11548 / VA1).